A 173-amino-acid chain; its full sequence is Cytochrome b6-f complex subunit 4, chloroplastic (173 aa).

The N-terminal 14 residues, 1-14 (ESALERRSSSVVMN), are a transit peptide targeting the chloroplast. Helical transmembrane passes span 49–69 (LLYM…GLAV), 108–128 (LLGV…PFIE), and 144–164 (SVFL…TLPI).

The protein belongs to the cytochrome b family. PetD subfamily. In terms of assembly, the 4 large subunits of the cytochrome b6-f complex are cytochrome b6, subunit IV (17 kDa polypeptide, petD), cytochrome f and the Rieske protein, while the 4 small subunits are petG, petL, petM and petN. The complex functions as a dimer.

Its subcellular location is the plastid. The protein resides in the chloroplast thylakoid membrane. Its function is as follows. Component of the cytochrome b6-f complex, which mediates electron transfer between photosystem II (PSII) and photosystem I (PSI), cyclic electron flow around PSI, and state transitions. The polypeptide is Cytochrome b6-f complex subunit 4, chloroplastic (Euglena gracilis).